A 419-amino-acid polypeptide reads, in one-letter code: Carboxypeptidase A1 (419 aa).

An N-terminal signal peptide occupies residues 1–16; it reads MKRLLVLSVLLAAVFG. A propeptide spans 17-110 (activation peptide); the sequence is NENFVGHQVL…KQQMSAFQAR (94 aa). A Peptidase M14 domain is found at 121–414; it reads TYHTLDEIYE…LALLTIMDHT (294 aa). Positions 179 and 182 each coordinate Zn(2+). Substrate is bound by residues 179–182, Arg237, and 254–255; these read HSRE and NR. An intrachain disulfide couples Cys248 to Cys271. His306 lines the Zn(2+) pocket. Residues 307–308 and Tyr358 each bind substrate; that span reads SY. Catalysis depends on Glu380, which acts as the Proton donor/acceptor.

Belongs to the peptidase M14 family. Monomer. Requires Zn(2+) as cofactor.

It localises to the secreted. It catalyses the reaction Release of a C-terminal amino acid, but little or no action with -Asp, -Glu, -Arg, -Lys or -Pro.. Functionally, carboxypeptidase that catalyzes the release of a C-terminal amino acid, but has little or no action with -Asp, -Glu, -Arg, -Lys or -Pro. The sequence is that of Carboxypeptidase A1 (Cpa1) from Mus musculus (Mouse).